The following is a 299-amino-acid chain: Superkiller complex protein 8 (299 aa).

WD repeat units lie at residues 11–48, 54–93, 96–135, 138–177, 180–219, 223–263, and 266–299; these read AHED…FLTE, KHIL…LHKT, SGPL…KLRS, NTNK…RVSE, AHGV…PYIA, GHSS…LDSS, and AHAD…ALKQ.

This sequence belongs to the SKI8 family.

This Dictyostelium discoideum (Social amoeba) protein is Superkiller complex protein 8 (skic8).